Reading from the N-terminus, the 180-residue chain is Probable cobalt-precorrin-6B C(15)-methyltransferase (decarboxylating) (180 aa).

Residues T16, 40–44 (GCGSG), D61, and A89 each bind S-adenosyl-L-methionine.

This sequence belongs to the methyltransferase superfamily. Archaeal-type CbiT family.

The enzyme catalyses Co-precorrin-6B + S-adenosyl-L-methionine = Co-precorrin-7 + S-adenosyl-L-homocysteine + CO2. The protein operates within cofactor biosynthesis; adenosylcobalamin biosynthesis; cob(II)yrinate a,c-diamide from sirohydrochlorin (anaerobic route): step 8/10. Catalyzes the methylation of C-15 in cobalt-precorrin-6B followed by the decarboxylation of C-12 to form cobalt-precorrin-7. In Methanococcus vannielii (strain ATCC 35089 / DSM 1224 / JCM 13029 / OCM 148 / SB), this protein is Probable cobalt-precorrin-6B C(15)-methyltransferase (decarboxylating).